We begin with the raw amino-acid sequence, 321 residues long: Anthranilate phosphoribosyltransferase (321 aa).

5-phospho-alpha-D-ribose 1-diphosphate-binding positions include Gly72, 75–76 (GD), Thr80, 82–85 (NVST), 99–107 (KHGNVSITS), and Ser111. Gly72 lines the anthranilate pocket. Residue Ser84 participates in Mg(2+) binding. Asn102 is a binding site for anthranilate. Anthranilate is bound at residue Arg157. Residues Asp216 and Glu217 each coordinate Mg(2+).

It belongs to the anthranilate phosphoribosyltransferase family. Homodimer. Mg(2+) is required as a cofactor.

It carries out the reaction N-(5-phospho-beta-D-ribosyl)anthranilate + diphosphate = 5-phospho-alpha-D-ribose 1-diphosphate + anthranilate. It functions in the pathway amino-acid biosynthesis; L-tryptophan biosynthesis; L-tryptophan from chorismate: step 2/5. In terms of biological role, catalyzes the transfer of the phosphoribosyl group of 5-phosphorylribose-1-pyrophosphate (PRPP) to anthranilate to yield N-(5'-phosphoribosyl)-anthranilate (PRA). The protein is Anthranilate phosphoribosyltransferase of Methanococcus maripaludis (strain DSM 14266 / JCM 13030 / NBRC 101832 / S2 / LL).